The primary structure comprises 227 residues: Cytochrome c oxidase subunit 2 (227 aa).

The Mitochondrial intermembrane segment spans residues 1–14 (MAYPFQLGLQDATS). A helical transmembrane segment spans residues 15–45 (PIMEELTNFHDHTLMIVFLISTLVLYIISLM). The Mitochondrial matrix portion of the chain corresponds to 46-59 (LTTKLTHTSTMDAQ). Residues 60–87 (EVETIWTILPAVILILIALPSLRILYMM) form a helical membrane-spanning segment. Over 88–227 (DEINNPVLTV…YFENWSASMI (140 aa)) the chain is Mitochondrial intermembrane. His-161, Cys-196, Glu-198, Cys-200, His-204, and Met-207 together coordinate Cu cation. Glu-198 lines the Mg(2+) pocket. Tyr-218 carries the post-translational modification Phosphotyrosine.

The protein belongs to the cytochrome c oxidase subunit 2 family. As to quaternary structure, component of the cytochrome c oxidase (complex IV, CIV), a multisubunit enzyme composed of 14 subunits. The complex is composed of a catalytic core of 3 subunits MT-CO1, MT-CO2 and MT-CO3, encoded in the mitochondrial DNA, and 11 supernumerary subunits COX4I, COX5A, COX5B, COX6A, COX6B, COX6C, COX7A, COX7B, COX7C, COX8 and NDUFA4, which are encoded in the nuclear genome. The complex exists as a monomer or a dimer and forms supercomplexes (SCs) in the inner mitochondrial membrane with NADH-ubiquinone oxidoreductase (complex I, CI) and ubiquinol-cytochrome c oxidoreductase (cytochrome b-c1 complex, complex III, CIII), resulting in different assemblies (supercomplex SCI(1)III(2)IV(1) and megacomplex MCI(2)III(2)IV(2)). Found in a complex with TMEM177, COA6, COX18, COX20, SCO1 and SCO2. Interacts with TMEM177 in a COX20-dependent manner. Interacts with COX20. Interacts with COX16. It depends on Cu cation as a cofactor.

Its subcellular location is the mitochondrion inner membrane. The catalysed reaction is 4 Fe(II)-[cytochrome c] + O2 + 8 H(+)(in) = 4 Fe(III)-[cytochrome c] + 2 H2O + 4 H(+)(out). Its function is as follows. Component of the cytochrome c oxidase, the last enzyme in the mitochondrial electron transport chain which drives oxidative phosphorylation. The respiratory chain contains 3 multisubunit complexes succinate dehydrogenase (complex II, CII), ubiquinol-cytochrome c oxidoreductase (cytochrome b-c1 complex, complex III, CIII) and cytochrome c oxidase (complex IV, CIV), that cooperate to transfer electrons derived from NADH and succinate to molecular oxygen, creating an electrochemical gradient over the inner membrane that drives transmembrane transport and the ATP synthase. Cytochrome c oxidase is the component of the respiratory chain that catalyzes the reduction of oxygen to water. Electrons originating from reduced cytochrome c in the intermembrane space (IMS) are transferred via the dinuclear copper A center (CU(A)) of subunit 2 and heme A of subunit 1 to the active site in subunit 1, a binuclear center (BNC) formed by heme A3 and copper B (CU(B)). The BNC reduces molecular oxygen to 2 water molecules using 4 electrons from cytochrome c in the IMS and 4 protons from the mitochondrial matrix. The chain is Cytochrome c oxidase subunit 2 (MT-CO2) from Leopoldamys sabanus (Long-tailed giant rat).